The primary structure comprises 159 residues: SsrA-binding protein (159 aa).

Residues 134 to 159 (KLHDKRETSKERDWNRQKNRLLKERG) form a disordered region. The span at 137–159 (DKRETSKERDWNRQKNRLLKERG) shows a compositional bias: basic and acidic residues.

This sequence belongs to the SmpB family.

It localises to the cytoplasm. Functionally, required for rescue of stalled ribosomes mediated by trans-translation. Binds to transfer-messenger RNA (tmRNA), required for stable association of tmRNA with ribosomes. tmRNA and SmpB together mimic tRNA shape, replacing the anticodon stem-loop with SmpB. tmRNA is encoded by the ssrA gene; the 2 termini fold to resemble tRNA(Ala) and it encodes a 'tag peptide', a short internal open reading frame. During trans-translation Ala-aminoacylated tmRNA acts like a tRNA, entering the A-site of stalled ribosomes, displacing the stalled mRNA. The ribosome then switches to translate the ORF on the tmRNA; the nascent peptide is terminated with the 'tag peptide' encoded by the tmRNA and targeted for degradation. The ribosome is freed to recommence translation, which seems to be the essential function of trans-translation. This chain is SsrA-binding protein, found in Rhizobium meliloti (strain 1021) (Ensifer meliloti).